Consider the following 200-residue polypeptide: Protein GrpE (200 aa).

Basic and acidic residues predominate over residues 1-11 (MTDNDGQKDFS). The tract at residues 1–43 (MTDNDGQKDFSEAAAENAGSKPGEPRVSKPYIMPDDPEETPSE) is disordered.

It belongs to the GrpE family. In terms of assembly, homodimer.

It localises to the cytoplasm. In terms of biological role, participates actively in the response to hyperosmotic and heat shock by preventing the aggregation of stress-denatured proteins, in association with DnaK and GrpE. It is the nucleotide exchange factor for DnaK and may function as a thermosensor. Unfolded proteins bind initially to DnaJ; upon interaction with the DnaJ-bound protein, DnaK hydrolyzes its bound ATP, resulting in the formation of a stable complex. GrpE releases ADP from DnaK; ATP binding to DnaK triggers the release of the substrate protein, thus completing the reaction cycle. Several rounds of ATP-dependent interactions between DnaJ, DnaK and GrpE are required for fully efficient folding. This chain is Protein GrpE, found in Afipia carboxidovorans (strain ATCC 49405 / DSM 1227 / KCTC 32145 / OM5) (Oligotropha carboxidovorans).